The primary structure comprises 116 residues: uncharacterized protein (116 aa).

One can recognise an HTH cro/C1-type domain in the interval 6–60; it reads LKKCRKQKKLTQQNMADKLGITRPAYTAYELGSREPDYKTLINISNILDVSLDYL. The H-T-H motif DNA-binding region spans 17–36; the sequence is QQNMADKLGITRPAYTAYEL.

This is an uncharacterized protein from Bacillus subtilis (strain 168).